We begin with the raw amino-acid sequence, 123 residues long: Large ribosomal subunit protein uL18 (123 aa).

This sequence belongs to the universal ribosomal protein uL18 family. In terms of assembly, part of the 50S ribosomal subunit; part of the 5S rRNA/L5/L18/L25 subcomplex. Contacts the 5S and 23S rRNAs.

Its function is as follows. This is one of the proteins that bind and probably mediate the attachment of the 5S RNA into the large ribosomal subunit, where it forms part of the central protuberance. The chain is Large ribosomal subunit protein uL18 from Bifidobacterium adolescentis (strain ATCC 15703 / DSM 20083 / NCTC 11814 / E194a).